Here is a 352-residue protein sequence, read N- to C-terminus: tRNA(Ile)-lysidine synthase (352 aa).

Residue 58–63 (SGGADS) coordinates ATP.

This sequence belongs to the tRNA(Ile)-lysidine synthase family.

It is found in the cytoplasm. The catalysed reaction is cytidine(34) in tRNA(Ile2) + L-lysine + ATP = lysidine(34) in tRNA(Ile2) + AMP + diphosphate + H(+). Functionally, ligates lysine onto the cytidine present at position 34 of the AUA codon-specific tRNA(Ile) that contains the anticodon CAU, in an ATP-dependent manner. Cytidine is converted to lysidine, thus changing the amino acid specificity of the tRNA from methionine to isoleucine. In Streptomyces coelicolor (strain ATCC BAA-471 / A3(2) / M145), this protein is tRNA(Ile)-lysidine synthase.